The sequence spans 273 residues: Putative phosphoenolpyruvate synthase regulatory protein (273 aa).

153–160 (GVSRCGKT) serves as a coordination point for ADP.

Belongs to the pyruvate, phosphate/water dikinase regulatory protein family. PSRP subfamily.

It catalyses the reaction [pyruvate, water dikinase] + ADP = [pyruvate, water dikinase]-phosphate + AMP + H(+). It carries out the reaction [pyruvate, water dikinase]-phosphate + phosphate + H(+) = [pyruvate, water dikinase] + diphosphate. In terms of biological role, bifunctional serine/threonine kinase and phosphorylase involved in the regulation of the phosphoenolpyruvate synthase (PEPS) by catalyzing its phosphorylation/dephosphorylation. The chain is Putative phosphoenolpyruvate synthase regulatory protein from Yersinia enterocolitica serotype O:8 / biotype 1B (strain NCTC 13174 / 8081).